The chain runs to 282 residues: MQRLRWLRDWKSSGRGLTAAKEPGARSSPLQAMRILQLILLALATGLVGGETRIIKGFECKPHSQPWQAALFEKTRLLCGATLIAPRWLLTAAHCLKPRYIVHLGQHNLQKEEGCEQTRTATESFPHPGFNNSLPNKDHRNDIMLVKMASPVSITWAVRPLTLSSRCVTAGTSCLISGWGSTSSPQLRLPHTLRCANITIIEHQKCENAYPGNITDTMVCASVQEGGKDSCQGDSGGPLVCNQSLQGIISWGQDPCAITRKPGVYTKVCKYVDWIQETMKNN.

Positions 1 to 50 (MQRLRWLRDWKSSGRGLTAAKEPGARSSPLQAMRILQLILLALATGLVGG) are cleaved as a signal peptide. Residues 51-53 (ETR) constitute a propeptide, activation peptide. Residues 53-280 (RIIKGFECKP…YVDWIQETMK (228 aa)) form the Peptidase S1 domain. Cystine bridges form between Cys60–Cys195, Cys79–Cys95, Cys167–Cys269, Cys174–Cys241, Cys206–Cys220, and Cys231–Cys256. His94 (charge relay system) is an active-site residue. The N-linked (GlcNAc...) asparagine glycan is linked to Asn131. The Charge relay system role is filled by Asp142. N-linked (GlcNAc...) asparagine glycosylation is found at Asn197 and Asn213. Ser235 functions as the Charge relay system in the catalytic mechanism. An N-linked (GlcNAc...) asparagine glycan is attached at Asn242.

The protein belongs to the peptidase S1 family. Kallikrein subfamily. In terms of processing, about 40% of KLK11 is inactivated by internal cleavage after Arg-188. This proteolytic inactivation may be effected by plasminogen. In terms of tissue distribution, expressed in brain, skin and prostate. Isoform 1 is expressed preferentially in brain. Isoform 2 is expressed in prostate. Present in seminal plasma at concentrations ranging from 2 to 37 microg/mL (at protein level).

Its subcellular location is the secreted. It localises to the golgi apparatus. Its function is as follows. Possible multifunctional protease. Efficiently cleaves 'bz-Phe-Arg-4-methylcoumaryl-7-amide', a kallikrein substrate, and weakly cleaves other substrates for kallikrein and trypsin. Cleaves synthetic peptides after arginine but not lysine residues. This Homo sapiens (Human) protein is Kallikrein-11 (KLK11).